Reading from the N-terminus, the 261-residue chain is Large ribosomal subunit protein uL2 (261 aa).

The interval 207–233 (VEHPHGGGNHQHIGKASTVKRGTPPGR) is disordered.

The protein belongs to the universal ribosomal protein uL2 family.

The protein resides in the cytoplasm. In Aedes albopictus (Asian tiger mosquito), this protein is Large ribosomal subunit protein uL2 (RpL8).